The following is a 103-amino-acid chain: Large ribosomal subunit protein bL21 (103 aa).

It belongs to the bacterial ribosomal protein bL21 family. Part of the 50S ribosomal subunit. Contacts protein L20.

Its function is as follows. This protein binds to 23S rRNA in the presence of protein L20. The chain is Large ribosomal subunit protein bL21 from Clostridium acetobutylicum (strain ATCC 824 / DSM 792 / JCM 1419 / IAM 19013 / LMG 5710 / NBRC 13948 / NRRL B-527 / VKM B-1787 / 2291 / W).